Reading from the N-terminus, the 38-residue chain is Putative defensin-like protein 105 (38 aa).

Disulfide bonds link cysteine 5/cysteine 27, cysteine 13/cysteine 33, and cysteine 17/cysteine 34.

The protein belongs to the DEFL family.

This Arabidopsis thaliana (Mouse-ear cress) protein is Putative defensin-like protein 105.